The sequence spans 214 residues: Osteoclast-stimulating factor 1 (214 aa).

At serine 2 the chain carries N-acetylserine. An SH3 domain is found at 12–71; that stretch reads GQVKVFRALYTFEPRTPDELYFEEGDIIYITDMSDTSWWKGTCKGRTGLIPSNYVAEQAE. ANK repeat units follow at residues 72-101, 105-135, and 139-168; these read SIDN…GVNG, AGST…ELNQ, and LGDT…RTDL. Residue threonine 200 is modified to Phosphothreonine. Phosphoserine is present on residues serine 202 and serine 213.

Interacts with SRC and SMN1. Interacts with FASLG.

It localises to the cytoplasm. Functionally, induces bone resorption, acting probably through a signaling cascade which results in the secretion of factor(s) enhancing osteoclast formation and activity. The chain is Osteoclast-stimulating factor 1 (Ostf1) from Rattus norvegicus (Rat).